We begin with the raw amino-acid sequence, 89 residues long: MSVADIKKSEVVAQFARGANDTGSPEVQVALLTARITELTGHFKTHAKDHHSRRGLLRMVSRRRKLLDYLKGKDADRYRALIEKLGLRK.

Belongs to the universal ribosomal protein uS15 family. Part of the 30S ribosomal subunit. Forms a bridge to the 50S subunit in the 70S ribosome, contacting the 23S rRNA.

One of the primary rRNA binding proteins, it binds directly to 16S rRNA where it helps nucleate assembly of the platform of the 30S subunit by binding and bridging several RNA helices of the 16S rRNA. In terms of biological role, forms an intersubunit bridge (bridge B4) with the 23S rRNA of the 50S subunit in the ribosome. This Burkholderia mallei (strain NCTC 10247) protein is Small ribosomal subunit protein uS15.